We begin with the raw amino-acid sequence, 242 residues long: Biosynthetic peptidoglycan transglycosylase (242 aa).

The helical transmembrane segment at 19–39 (LMVVLAVFWGGGIALFSVAPV) threads the bilayer.

This sequence belongs to the glycosyltransferase 51 family.

Its subcellular location is the cell inner membrane. The enzyme catalyses [GlcNAc-(1-&gt;4)-Mur2Ac(oyl-L-Ala-gamma-D-Glu-L-Lys-D-Ala-D-Ala)](n)-di-trans,octa-cis-undecaprenyl diphosphate + beta-D-GlcNAc-(1-&gt;4)-Mur2Ac(oyl-L-Ala-gamma-D-Glu-L-Lys-D-Ala-D-Ala)-di-trans,octa-cis-undecaprenyl diphosphate = [GlcNAc-(1-&gt;4)-Mur2Ac(oyl-L-Ala-gamma-D-Glu-L-Lys-D-Ala-D-Ala)](n+1)-di-trans,octa-cis-undecaprenyl diphosphate + di-trans,octa-cis-undecaprenyl diphosphate + H(+). The protein operates within cell wall biogenesis; peptidoglycan biosynthesis. In terms of biological role, peptidoglycan polymerase that catalyzes glycan chain elongation from lipid-linked precursors. This Escherichia coli O157:H7 protein is Biosynthetic peptidoglycan transglycosylase.